The following is a 382-amino-acid chain: Lipid-A-disaccharide synthase (382 aa).

This sequence belongs to the LpxB family.

The catalysed reaction is 2-N,3-O-bis[(3R)-3-hydroxytetradecanoyl]-alpha-D-glucosaminyl 1-phosphate + UDP-2-N,3-O-bis[(3R)-3-hydroxytetradecanoyl]-alpha-D-glucosamine = lipid A disaccharide (E. coli) + UDP + H(+). It carries out the reaction a lipid X + a UDP-2-N,3-O-bis[(3R)-3-hydroxyacyl]-alpha-D-glucosamine = a lipid A disaccharide + UDP + H(+). It functions in the pathway glycolipid biosynthesis; lipid IV(A) biosynthesis; lipid IV(A) from (3R)-3-hydroxytetradecanoyl-[acyl-carrier-protein] and UDP-N-acetyl-alpha-D-glucosamine: step 5/6. In terms of biological role, condensation of UDP-2,3-diacylglucosamine and 2,3-diacylglucosamine-1-phosphate to form lipid A disaccharide, a precursor of lipid A, a phosphorylated glycolipid that anchors the lipopolysaccharide to the outer membrane of the cell. In Escherichia coli O7:K1 (strain IAI39 / ExPEC), this protein is Lipid-A-disaccharide synthase.